Consider the following 224-residue polypeptide: Redox-sensing transcriptional repressor Rex (224 aa).

Residues Arg-17 to Phe-56 constitute a DNA-binding region (H-T-H motif). Gly-91–Gly-96 is an NAD(+) binding site.

It belongs to the transcriptional regulatory Rex family. Homodimer.

Its subcellular location is the cytoplasm. Functionally, modulates transcription in response to changes in cellular NADH/NAD(+) redox state. This is Redox-sensing transcriptional repressor Rex from Thermoanaerobacter pseudethanolicus (strain ATCC 33223 / 39E) (Clostridium thermohydrosulfuricum).